The chain runs to 618 residues: MALLSITPLVSRSCLSSSHEIKALRRTIPTLGICRPGKSVAHSINMCLTSVASTDSVQRRVGNYHSNLWDDDFIQSLISTPYGAPDYRERADRLIGEVKDIMFNFKSLEDGGNDLLQRLLLVDDVERLGIDRHFKKEIKTALDYVNSYWNEKGIGCGRESVVTDLNSTALGLRTLRLHGYTVSSDVLNVFKDKNGQFSSTANIQIEGEIRGVLNLFRASLVAFPGEKVMDEAETFSTKYLREALQKIPASSILSLEIRDVLEYGWHTNLPRLEARNYMDVFGQHTKNKNAAEKLLELAKLEFNIFHSLQERELKHVSRWWKDSGSPEMTFCRHRHVEYYALASCIAFEPQHSGFRLGFTKMSHLITVLDDMYDVFGTVDELELFTATIKRWDPSAMECLPEYMKGVYMMVYHTVNEMARVAEKAQGRDTLNYARQAWEACFDSYMQEAKWIATGYLPTFEEYLENGKVSSAHRPCALQPILTLDIPFPDHILKEVDFPSKLNDLICIILRLRGDTRCYKADRARGEEASSISCYMKDNPGLTEEDALNHINFMIRDAIRELNWELLKPDNSVPITSKKHAFDISRVWHHGYRYRDGYSFANVETKSLVMRTVIEPVPL.

The transit peptide at 1 to 51 (MALLSITPLVSRSCLSSSHEIKALRRTIPTLGICRPGKSVAHSINMCLTSV) directs the protein to the chloroplast. Asp-369, Asp-373, and Asp-521 together coordinate Mg(2+). The DDXXD motif motif lies at 369 to 373 (DDMYD).

Belongs to the terpene synthase family. Tpsd subfamily. The cofactor is Mg(2+). Mn(2+) is required as a cofactor. It depends on K(+) as a cofactor.

It is found in the plastid. It localises to the chloroplast. The catalysed reaction is (2E)-geranyl diphosphate = (1S,4R)-camphene + diphosphate. It participates in terpene metabolism; oleoresin biosynthesis. Its function is as follows. Involved in defensive oleoresin formation in conifers in response to insect attack or other injury. Involved in monoterpene (C10) olefins biosynthesis. The polypeptide is Camphene synthase, chloroplastic (ag6) (Abies grandis (Grand fir)).